The chain runs to 105 residues: Pyrimidine/purine nucleoside phosphorylase (105 aa).

The protein belongs to the nucleoside phosphorylase PpnP family.

It catalyses the reaction a purine D-ribonucleoside + phosphate = a purine nucleobase + alpha-D-ribose 1-phosphate. It carries out the reaction adenosine + phosphate = alpha-D-ribose 1-phosphate + adenine. The enzyme catalyses cytidine + phosphate = cytosine + alpha-D-ribose 1-phosphate. The catalysed reaction is guanosine + phosphate = alpha-D-ribose 1-phosphate + guanine. It catalyses the reaction inosine + phosphate = alpha-D-ribose 1-phosphate + hypoxanthine. It carries out the reaction thymidine + phosphate = 2-deoxy-alpha-D-ribose 1-phosphate + thymine. The enzyme catalyses uridine + phosphate = alpha-D-ribose 1-phosphate + uracil. The catalysed reaction is xanthosine + phosphate = alpha-D-ribose 1-phosphate + xanthine. Catalyzes the phosphorolysis of diverse nucleosides, yielding D-ribose 1-phosphate and the respective free bases. Can use uridine, adenosine, guanosine, cytidine, thymidine, inosine and xanthosine as substrates. Also catalyzes the reverse reactions. This chain is Pyrimidine/purine nucleoside phosphorylase, found in Wolinella succinogenes (strain ATCC 29543 / DSM 1740 / CCUG 13145 / JCM 31913 / LMG 7466 / NCTC 11488 / FDC 602W) (Vibrio succinogenes).